The primary structure comprises 752 residues: Catalase-peroxidase (752 aa).

Residues methionine 1–threonine 20 form a disordered region. The tryptophyl-tyrosyl-methioninium (Trp-Tyr) (with M-260) cross-link spans tryptophan 111–tyrosine 234. The active-site Proton acceptor is histidine 112. The tryptophyl-tyrosyl-methioninium (Tyr-Met) (with W-111) cross-link spans tyrosine 234 to methionine 260. Histidine 275 is a binding site for heme b.

This sequence belongs to the peroxidase family. Peroxidase/catalase subfamily. In terms of assembly, homodimer or homotetramer. The cofactor is heme b. In terms of processing, formation of the three residue Trp-Tyr-Met cross-link is important for the catalase, but not the peroxidase activity of the enzyme.

The catalysed reaction is H2O2 + AH2 = A + 2 H2O. The enzyme catalyses 2 H2O2 = O2 + 2 H2O. Functionally, bifunctional enzyme with both catalase and broad-spectrum peroxidase activity. The sequence is that of Catalase-peroxidase from Koribacter versatilis (strain Ellin345).